A 213-amino-acid polypeptide reads, in one-letter code: MNLLIMGPPGAGKGTQAEVLVKELKITHISTGDMFRAAIKEGTEMGKKAKEYMDKGALVPDEVVIGMVKDRLSQADCKEGFLLDGFPRTVEQASALDATLQDLGIKLDAVINIEVPLEKLMARLTGRRVCKNCGASYHVIFNPPQAEGKCNSCNGELYQRSDDNEESVGTRLNAYIEKTKPLIDYYEAKGILKNINGDQEISAVLNDILVAVK.

Residue 10–15 (GAGKGT) coordinates ATP. Residues 30–59 (STGDMFRAAIKEGTEMGKKAKEYMDKGALV) are NMP. AMP contacts are provided by residues threonine 31, arginine 36, 57-59 (ALV), 85-88 (GFPR), and glutamine 92. The segment at 126 to 163 (GRRVCKNCGASYHVIFNPPQAEGKCNSCNGELYQRSDD) is LID. ATP is bound at residue arginine 127. The Zn(2+) site is built by cysteine 130 and cysteine 133. An ATP-binding site is contributed by 136–137 (SY). The Zn(2+) site is built by cysteine 150 and cysteine 153. Residues arginine 160 and arginine 171 each coordinate AMP. Residue glutamine 199 coordinates ATP.

Belongs to the adenylate kinase family. In terms of assembly, monomer.

The protein resides in the cytoplasm. It catalyses the reaction AMP + ATP = 2 ADP. The protein operates within purine metabolism; AMP biosynthesis via salvage pathway; AMP from ADP: step 1/1. Its function is as follows. Catalyzes the reversible transfer of the terminal phosphate group between ATP and AMP. Plays an important role in cellular energy homeostasis and in adenine nucleotide metabolism. The protein is Adenylate kinase of Desulforamulus reducens (strain ATCC BAA-1160 / DSM 100696 / MI-1) (Desulfotomaculum reducens).